A 193-amino-acid chain; its full sequence is Potassium-transporting ATPase KdpC subunit (193 aa).

A helical membrane pass occupies residues 14–34 (ITFTFLVLCGLVYPLIVTGIA).

The protein belongs to the KdpC family. The system is composed of three essential subunits: KdpA, KdpB and KdpC.

Its subcellular location is the cell membrane. In terms of biological role, part of the high-affinity ATP-driven potassium transport (or Kdp) system, which catalyzes the hydrolysis of ATP coupled with the electrogenic transport of potassium into the cytoplasm. This subunit acts as a catalytic chaperone that increases the ATP-binding affinity of the ATP-hydrolyzing subunit KdpB by the formation of a transient KdpB/KdpC/ATP ternary complex. The protein is Potassium-transporting ATPase KdpC subunit of Bacillus thuringiensis subsp. konkukian (strain 97-27).